The following is a 281-amino-acid chain: Phosphatidylglycerol--prolipoprotein diacylglyceryl transferase (281 aa).

4 helical membrane-spanning segments follow: residues 23-43, 71-91, 107-127, and 133-153; these read VGPL…LFAW, FVIW…VLFY, WDGG…MILF, and ILVW…LGVV. R154 serves as a coordination point for a 1,2-diacyl-sn-glycero-3-phospho-(1'-sn-glycerol). A run of 3 helical transmembrane segments spans residues 189 to 209, 217 to 237, and 247 to 267; these read LYEA…LVWG, GFVA…VEFF, and LFGG…LLGL.

The protein belongs to the Lgt family.

It localises to the cell inner membrane. It carries out the reaction L-cysteinyl-[prolipoprotein] + a 1,2-diacyl-sn-glycero-3-phospho-(1'-sn-glycerol) = an S-1,2-diacyl-sn-glyceryl-L-cysteinyl-[prolipoprotein] + sn-glycerol 1-phosphate + H(+). It participates in protein modification; lipoprotein biosynthesis (diacylglyceryl transfer). Functionally, catalyzes the transfer of the diacylglyceryl group from phosphatidylglycerol to the sulfhydryl group of the N-terminal cysteine of a prolipoprotein, the first step in the formation of mature lipoproteins. In Brucella abortus (strain S19), this protein is Phosphatidylglycerol--prolipoprotein diacylglyceryl transferase.